The sequence spans 197 residues: Imidazoleglycerol-phosphate dehydratase (197 aa).

The protein belongs to the imidazoleglycerol-phosphate dehydratase family.

The protein resides in the cytoplasm. It carries out the reaction D-erythro-1-(imidazol-4-yl)glycerol 3-phosphate = 3-(imidazol-4-yl)-2-oxopropyl phosphate + H2O. The protein operates within amino-acid biosynthesis; L-histidine biosynthesis; L-histidine from 5-phospho-alpha-D-ribose 1-diphosphate: step 6/9. This Streptomyces coelicolor (strain ATCC BAA-471 / A3(2) / M145) protein is Imidazoleglycerol-phosphate dehydratase (hisB).